Reading from the N-terminus, the 262-residue chain is MKRKTVWKIWITLALIALLSITALAGCSSESSTTNKEDGAKSTETSAGTNTLEKIKKRGKLIVGVKYDLNLFGLKNPETGKVEGFDIDIAKGLAKKILGDENKIELKEVTSKTRIPMLNNGEIDAIIGTMTITEERKKEVDFSDVYFMAGQSLLVKKDSKINSVKDLKKGMTVLTAKGSTSAQNIRKVAPEVNVLEFENYAEAFTALKAGQGDALTTDNALLWGMAKQDPNYRVLDETFSKEPYGIGSAKETKNYCKSLTNT.

Residues 1–26 (MKRKTVWKIWITLALIALLSITALAG) form the signal peptide. Cysteine 27 carries N-palmitoyl cysteine lipidation. A lipid anchor (S-diacylglycerol cysteine) is attached at cysteine 27.

It belongs to the bacterial solute-binding protein 3 family.

The protein resides in the cell membrane. In terms of biological role, involved in glutamine-transport system. Interacts with the glutamine-transport system GlnPQ. This Geobacillus stearothermophilus (Bacillus stearothermophilus) protein is Glutamine-binding protein (glnH).